The following is a 117-amino-acid chain: Large ribosomal subunit protein uL18 (117 aa).

The protein belongs to the universal ribosomal protein uL18 family. Part of the 50S ribosomal subunit; part of the 5S rRNA/L5/L18/L25 subcomplex. Contacts the 5S and 23S rRNAs.

Its function is as follows. This is one of the proteins that bind and probably mediate the attachment of the 5S RNA into the large ribosomal subunit, where it forms part of the central protuberance. In Nitrosococcus oceani (strain ATCC 19707 / BCRC 17464 / JCM 30415 / NCIMB 11848 / C-107), this protein is Large ribosomal subunit protein uL18.